Consider the following 59-residue polypeptide: Large ribosomal subunit protein bL32 (59 aa).

Positions 1–28 (MAVQQNKKSPSKRGMHRAHDFLTDPPLA) are disordered.

It belongs to the bacterial ribosomal protein bL32 family.

The protein is Large ribosomal subunit protein bL32 of Aromatoleum aromaticum (strain DSM 19018 / LMG 30748 / EbN1) (Azoarcus sp. (strain EbN1)).